The following is a 142-amino-acid chain: MAKKVTGYLKLQVPAGAANPSPPIGPALGQRGLNIMEFCKAFNAQTQKEEKNTPIPVVITIYADRSFTFEMKTPPMAYFLKQAAKIQSGSKTPGRDAAGTLTRAQVREIAEKKMKDLNCDTVEAAMSMVEGSARSMGLQVAE.

The protein belongs to the universal ribosomal protein uL11 family. As to quaternary structure, part of the ribosomal stalk of the 50S ribosomal subunit. Interacts with L10 and the large rRNA to form the base of the stalk. L10 forms an elongated spine to which L12 dimers bind in a sequential fashion forming a multimeric L10(L12)X complex. One or more lysine residues are methylated.

Forms part of the ribosomal stalk which helps the ribosome interact with GTP-bound translation factors. This Nitrobacter winogradskyi (strain ATCC 25391 / DSM 10237 / CIP 104748 / NCIMB 11846 / Nb-255) protein is Large ribosomal subunit protein uL11.